The sequence spans 420 residues: Exodeoxyribonuclease 7 large subunit (420 aa).

Belongs to the XseA family. In terms of assembly, heterooligomer composed of large and small subunits.

Its subcellular location is the cytoplasm. It catalyses the reaction Exonucleolytic cleavage in either 5'- to 3'- or 3'- to 5'-direction to yield nucleoside 5'-phosphates.. Functionally, bidirectionally degrades single-stranded DNA into large acid-insoluble oligonucleotides, which are then degraded further into small acid-soluble oligonucleotides. The chain is Exodeoxyribonuclease 7 large subunit from Helicobacter pylori (strain Shi470).